Reading from the N-terminus, the 25-residue chain is Xenoposin precursor fragment BM2 (25 aa).

In terms of tissue distribution, expressed by the skin glands.

Its subcellular location is the secreted. Functionally, antimicrobial peptide. The polypeptide is Xenoposin precursor fragment BM2 (Xenopus boumbaensis (Mawa clawed frog)).